A 960-amino-acid polypeptide reads, in one-letter code: Dynamin-like GTPase OPA1, mitochondrial (960 aa).

The transit peptide at 1 to 87 (MWRLRRAAVA…IKYGYQPRRN (87 aa)) directs the protein to the mitochondrion. Residues 88 to 96 (FWPARLATR) are Mitochondrial matrix-facing. Residues 97-113 (LLKLRYLILGSAVGGGY) traverse the membrane as a helical segment. The Mitochondrial intermembrane segment spans residues 114–770 (TAKKTFDQWK…NAIENMVGPD (657 aa)). Short sequence motifs (LQQQIQ motif) lie at residues 181 to 186 (DFFTSG) and 217 to 222 (QLQEEL). Positions 210-254 (SDKEKIDQLQEELLHTQLKYQRILERLEKENKELRKLVLQKDDKG) form a coiled coil. Lys-228 bears the N6-acetyllysine mark. An LQQQIQ motif motif is present at residues 235-240 (RLEKEN). Positions 285–561 (QDHLPRVVVV…FWKMVRESVE (277 aa)) constitute a Dynamin-type G domain. Residues 295–302 (GDQSAGKT) form a G1 motif region. Residues Ser-298, Gly-300, Lys-301, Thr-302, Ser-303, and Gly-317 each coordinate GTP. Thr-302 lines the Mg(2+) pocket. Positions 321–324 (MMTR) are G2 motif. Mg(2+) contacts are provided by Thr-323 and Asp-398. Residues 398–401 (DLPG) are G3 motif. Residues 467 to 470 (TKVD) are G4 motif. GTP-binding residues include Lys-468, Asp-470, Thr-503, Gly-506, and Asn-507. The segment at 501–504 (VVTG) is G5 motif. 2 stalk region regions span residues 589–836 (DRNE…IKDT) and 874–928 (CNDV…IKLL). Residues 736-856 (SDKQQWDAAI…KTALNHCNLC (121 aa)) form a paddle region region. The stretch at 771–781 (WKKRWLYWKNR) is an intramembrane region. Over 782–960 (TQEQCVHNET…AFIEALHQEK (179 aa)) the chain is Mitochondrial intermembrane. The cysteines at positions 856 and 874 are disulfide-linked. A coiled-coil region spans residues 895 to 960 (RQQLTNTEVR…AFIEALHQEK (66 aa)).

The protein belongs to the TRAFAC class dynamin-like GTPase superfamily. Dynamin/Fzo/YdjA family. As to quaternary structure, oligomeric complex consisting of membrane-bound and soluble forms of OPA1. Interacts with RCC1L; RCC1L acts as a guanine nucleotide exchange factor (GEF) for OPA1 by exchanging bound GDP for free GTP. Interacts with CHCHD3 and IMMT; these interactions occur preferentially with soluble OPA1 forms. Interacts with PRELID1. Cleaved by OMA1 or YME1L downstream of the transmembrane region in response to different signals to generate soluble forms. Cleaved by OMA1 at position S1 following stress conditions, generating the short soluble form (Dynamin-like GTPase OPA1, short form; S-OPA1). AFG3L2 is involved in the regulation of OMA1-dependent processing of OPA1. PARL-dependent proteolytic processing releases an antiapoptotic soluble form not required for mitochondrial fusion. Post-translationally, cleavage at position S2 by YME1L is required to mediate oxidative phosphorylation (OXPHOS)-induced mitochondrial fusion. Cleavage occurs in the sequence motif Leu-Gln-Gln-Gln-Ile-Gln (LQQQIQ). In terms of processing, cleavage at position S2 by YME1L is required to mediate oxidative phosphorylation (OXPHOS)-induced mitochondrial fusion. Cleavage occurs in the sequence motif Leu-Gln-Gln-Gln-Ile-Gln (LQQQIQ). Cleavage at position S3 by YME1L is required for membrane tubulation. Cleavage at position S3 by YME1L is required for membrane tubulation. Highly expressed in retina. Also expressed in brain, testis, heart and skeletal muscle. Low levels of all isoforms expressed in a variety of tissues. As to expression, expressed in retina, skeletal muscle, heart, lung, ovary, colon, thyroid gland, leukocytes and fetal brain. Low levels of all isoforms expressed in a variety of tissues. In terms of tissue distribution, isoform 2 expressed in colon, liver, kidney, thyroid gland and leukocytes.

Its subcellular location is the mitochondrion inner membrane. The protein localises to the mitochondrion intermembrane space. It carries out the reaction GTP + H2O = GDP + phosphate + H(+). With respect to regulation, activated by guanine nucleotide exchange factor RCC1L. Dynamin-related GTPase that is essential for normal mitochondrial morphology by mediating fusion of the mitochondrial inner membranes, regulating cristae morphology and maintaining respiratory chain function. Exists in two forms: the transmembrane, long form (Dynamin-like GTPase OPA1, long form; L-OPA1), which is tethered to the inner mitochondrial membrane, and the short soluble form (Dynamin-like GTPase OPA1, short form; S-OPA1), which results from proteolytic cleavage and localizes in the intermembrane space. Both forms (L-OPA1 and S-OPA1) cooperate to catalyze the fusion of the mitochondrial inner membrane. The equilibrium between L-OPA1 and S-OPA1 is essential: excess levels of S-OPA1, produced by cleavage by OMA1 following loss of mitochondrial membrane potential, lead to an impaired equilibrium between L-OPA1 and S-OPA1, inhibiting mitochondrial fusion. The balance between L-OPA1 and S-OPA1 also influences cristae shape and morphology. Involved in remodeling cristae and the release of cytochrome c during apoptosis. Proteolytic processing by PARL in response to intrinsic apoptotic signals may lead to disassembly of OPA1 oligomers and release of the caspase activator cytochrome C (CYCS) into the mitochondrial intermembrane space. Acts as a regulator of T-helper Th17 cells, which are characterized by cells with fused mitochondria with tight cristae, by mediating mitochondrial membrane remodeling: OPA1 is required for interleukin-17 (IL-17) production. Its role in mitochondrial morphology is required for mitochondrial genome maintenance. In terms of biological role, constitutes the transmembrane long form (L-OPA1) that plays a central role in mitochondrial inner membrane fusion and cristae morphology. L-OPA1 and the soluble short form (S-OPA1) form higher-order helical assemblies that coordinate the fusion of mitochondrial inner membranes. Inner membrane-anchored L-OPA1 molecules initiate membrane remodeling by recruiting soluble S-OPA1 to rapidly polymerize into a flexible cylindrical scaffold encaging the mitochondrial inner membrane. Once at the membrane surface, the formation of S-OPA1 helices induce bilayer curvature. OPA1 dimerization through the paddle region, which inserts into cardiolipin-containing membrane, promotes GTP hydrolysis and the helical assembly of a flexible OPA1 lattice on the membrane, which drives membrane curvature and mitochondrial fusion. Plays a role in the maintenance and remodeling of mitochondrial cristae, some invaginations of the mitochondrial inner membrane that provide an increase in the surface area. Probably acts by forming helical filaments at the inside of inner membrane tubes with the shape and dimensions of crista junctions. The equilibrium between L-OPA1 and S-OPA1 influences cristae shape and morphology: increased L-OPA1 levels promote cristae stacking and elongated mitochondria, while increased S-OPA1 levels correlated with irregular cristae packing and round mitochondria shape. Functionally, constitutes the soluble short form (S-OPA1) generated by cleavage by OMA1, which plays a central role in mitochondrial inner membrane fusion and cristae morphology. The transmembrane long form (L-OPA1) and the S-OPA1 form higher-order helical assemblies that coordinate the fusion of mitochondrial inner membranes. Inner membrane-anchored L-OPA1 molecules initiate membrane remodeling by recruiting soluble S-OPA1 to rapidly polymerize into a flexible cylindrical scaffold encaging the mitochondrial inner membrane. Once at the membrane surface, the formation of S-OPA1 helices induce bilayer curvature. OPA1 dimerization through the paddle region, which inserts into cardiolipin-containing membrane, promotes GTP hydrolysis and the helical assembly of a flexible OPA1 lattice on the membrane, which drives membrane curvature and mitochondrial fusion. Excess levels of S-OPA1 produced by cleavage by OMA1 following stress conditions that induce loss of mitochondrial membrane potential, lead to an impaired equilibrium between L-OPA1 and S-OPA1, thereby inhibiting mitochondrial fusion. Involved in mitochondrial safeguard in response to transient mitochondrial membrane depolarization by mediating flickering: cleavage by OMA1 leads to excess production of S-OPA1, preventing mitochondrial hyperfusion. Plays a role in the maintenance and remodeling of mitochondrial cristae, some invaginations of the mitochondrial inner membrane that provide an increase in the surface area. Probably acts by forming helical filaments at the inside of inner membrane tubes with the shape and dimensions of crista junctions. The equilibrium between L-OPA1 and S-OPA1 influences cristae shape and morphology: increased L-OPA1 levels promote cristae stacking and elongated mitochondria, while increased S-OPA1 levels correlated with irregular cristae packing and round mitochondria shape. Its function is as follows. Coexpression of isoform 1 with shorter alternative products is required for optimal activity in promoting mitochondrial fusion. Isoforms that contain the alternative exon 4b are required for mitochondrial genome maintenance, possibly by anchoring the mitochondrial nucleoids to the inner mitochondrial membrane. The polypeptide is Dynamin-like GTPase OPA1, mitochondrial (Homo sapiens (Human)).